We begin with the raw amino-acid sequence, 343 residues long: Peroxisome assembly protein 12 (343 aa).

Topologically, residues 1–5 (MDSPS) are peroxisomal matrix. A helical transmembrane segment spans residues 6–33 (LLEVLQVQQVEKLISPSLRFILAYFTHR). The Cytoplasmic segment spans residues 34 to 37 (YPRF). The chain crosses the membrane as a helical span at residues 38–62 (LLRAYNSFDGIYLLVKLLLEKSQLK). At 63–102 (KWNATSVERRFQLKRVIAVRDSSIIAEEFPQESESATSLN) the chain is on the peroxisomal matrix side. Residues 103 to 140 (GIDVLKKLFLTYCIPYLLEKCESLTTVKENHTAVSILS) form a helical membrane-spanning segment. The Cytoplasmic portion of the chain corresponds to 141 to 146 (LQARDK). Residues 147–193 (QKGALSVFYSKIKILLVRLKKILHFVFRLIRKSNTYLQWLYYLLYAL) traverse the membrane as a helical segment. Residues 194 to 238 (GKTPYTNLADHILRQRVIYNVENIHSRKLISTREKSSLLTSIADH) are Peroxisomal matrix-facing. The helical transmembrane segment at 239-266 (SMEGFLIIIQLIDWWQSNNYESHLKKGE) threads the bilayer. Residues 267–343 (VAFTELAPPK…KGESFWRLMI (77 aa)) are Cytoplasmic-facing. Zn(2+) is bound by residues cysteine 289, cysteine 292, cysteine 309, and cysteine 312. Residues 289–328 (CKICGEKIKNPAVLSTGFVFCYPCIQVWLQRHPFKCPVTN) form an RING-type; degenerate zinc finger.

This sequence belongs to the pex2/pex10/pex12 family. Component of the PEX2-PEX10-PEX12 retrotranslocation channel, composed of PEX2, PEX10 and PEX12.

It is found in the peroxisome membrane. It participates in protein modification; protein ubiquitination. Component of a retrotranslocation channel required for peroxisome organization by mediating export of the PEX5 receptor from peroxisomes to the cytosol, thereby promoting PEX5 recycling. The retrotranslocation channel is composed of PEX2, PEX10 and PEX12; each subunit contributing transmembrane segments that coassemble into an open channel that specifically allows the passage of PEX5 through the peroxisomal membrane. PEX12 also regulates PEX5 recycling by activating the E3 ubiquitin-protein ligase activity of PEX10. When PEX5 recycling is compromised, PEX12 stimulates PEX10-mediated polyubiquitination of PEX5, leading to its subsequent degradation. This is Peroxisome assembly protein 12 (pex12) from Schizosaccharomyces pombe (strain 972 / ATCC 24843) (Fission yeast).